We begin with the raw amino-acid sequence, 232 residues long: Jasmonate ZIM domain-containing protein 1 (232 aa).

The interval 1–24 is disordered; it reads MSSFPNTVAEGRRSGKAPEKSTFS. Residues 10-19 are compositionally biased toward basic and acidic residues; that stretch reads EGRRSGKAPE. The Tify domain occupies 96–131; it reads PGPESPQLTIFYAGKMLVFDAFPPEKATEVMEMATK. 2 stretches are compositionally biased toward polar residues: residues 133 to 142 and 158 to 167; these read ASNNSGTEES and MPQTNTSSET. The tract at residues 133–232 is disordered; sequence ASNNSGTEES…QCSKQFDLNF (100 aa). The Nuclear localization signal motif lies at 182-189; that stretch reads PRRASLLK. Residues 183–205 carry the Jas motif; that stretch reads RRASLLKFLEKRKERVNARGPYQ. The span at 190 to 199 shows a compositional bias: basic and acidic residues; it reads FLEKRKERVN.

It belongs to the TIFY/JAZ family. In terms of assembly, (Microbial infection) Interacts with the pathogenic Pseudomonas syringae HopZ1a protein; this interaction leads to its degradation. Ubiquitinated. Targeted for degradation by the SCF(COI1) E3 ubiquitin ligase-proteasome pathway during jasmonate signaling. Post-translationally, (Microbial infection) Acetylated by Pseudomonas syringae HopZ1a. In terms of tissue distribution, mostly expressed in leaves and flowers and, to a lower extent, in grean pods and roots.

The protein localises to the nucleus. The protein resides in the cell membrane. Its function is as follows. Repressor of jasmonate responses. This Glycine max (Soybean) protein is Jasmonate ZIM domain-containing protein 1.